The primary structure comprises 491 residues: UDP-N-acetylmuramate--L-alanine ligase (491 aa).

ATP is bound at residue 126–132 (GTHGKTT).

This sequence belongs to the MurCDEF family.

The protein resides in the cytoplasm. It catalyses the reaction UDP-N-acetyl-alpha-D-muramate + L-alanine + ATP = UDP-N-acetyl-alpha-D-muramoyl-L-alanine + ADP + phosphate + H(+). It participates in cell wall biogenesis; peptidoglycan biosynthesis. Cell wall formation. This chain is UDP-N-acetylmuramate--L-alanine ligase, found in Salmonella arizonae (strain ATCC BAA-731 / CDC346-86 / RSK2980).